An 867-amino-acid polypeptide reads, in one-letter code: Leucine--tRNA ligase (867 aa).

Residues 40-51 (PYPSGAGLHVGH) carry the 'HIGH' region motif. A 'KMSKS' region motif is present at residues 638-642 (KMSKS). Lys641 contributes to the ATP binding site.

The protein belongs to the class-I aminoacyl-tRNA synthetase family.

Its subcellular location is the cytoplasm. The enzyme catalyses tRNA(Leu) + L-leucine + ATP = L-leucyl-tRNA(Leu) + AMP + diphosphate. This is Leucine--tRNA ligase from Leptospira biflexa serovar Patoc (strain Patoc 1 / Ames).